The sequence spans 144 residues: Ribonuclease P protein subunit RPR2 (144 aa).

The tract at residues 1 to 22 (MGKKAHGGKMKPEIDENGTLLV) is disordered. Positions 90, 93, 115, and 117 each coordinate Zn(2+).

Belongs to the eukaryotic/archaeal RNase P protein component 4 family. As to quaternary structure, component of nuclear RNase P. RNase P consists of an RNA moiety and at least 9 protein subunits including POP1, POP3, POP4, POP5, POP6, POP7, POP8, RPP1 and RPR2, many of which are shared with the RNase MPR complex. Zn(2+) serves as cofactor.

It is found in the nucleus. The catalysed reaction is Endonucleolytic cleavage of RNA, removing 5'-extranucleotides from tRNA precursor.. In terms of biological role, component of ribonuclease P, a protein complex that generates mature tRNA molecules by cleaving their 5'-ends. The polypeptide is Ribonuclease P protein subunit RPR2 (RPR2) (Saccharomyces cerevisiae (strain ATCC 204508 / S288c) (Baker's yeast)).